Here is a 306-residue protein sequence, read N- to C-terminus: ATP synthase F(1) complex subunit gamma, mitochondrial (306 aa).

The N-terminal 17 residues, 1-17, are a transit peptide targeting the mitochondrion; that stretch reads MNSASKLFVVLASPANQ.

This sequence belongs to the ATPase gamma chain family. As to quaternary structure, component of the ATP synthase complex composed at least of ATP5F1A/subunit alpha, ATP5F1B/subunit beta, ATP5MC1/subunit c (homooctomer), MT-ATP6/subunit a, MT-ATP8/subunit 8, ATP5ME/subunit e, ATP5MF/subunit f, ATP5MG/subunit g, ATP5MK/subunit k, ATP5MJ/subunit j, ATP5F1C/subunit gamma, ATP5F1D/subunit delta, ATP5F1E/subunit epsilon, ATP5PF/subunit F6, ATP5PB/subunit b, ATP5PD/subunit d, ATP5PO/subunit OSCP. ATP synthase complex consists of a soluble F(1) head domain (subunits alpha(3) and beta(3)) - the catalytic core - and a membrane F(0) domain - the membrane proton channel (subunits c, a, 8, e, f, g, k and j). These two domains are linked by a central stalk (subunits gamma, delta, and epsilon) rotating inside the F1 region and a stationary peripheral stalk (subunits F6, b, d, and OSCP).

It localises to the mitochondrion inner membrane. In terms of biological role, subunit gamma, of the mitochondrial membrane ATP synthase complex (F(1)F(0) ATP synthase or Complex V) that produces ATP from ADP in the presence of a proton gradient across the membrane which is generated by electron transport complexes of the respiratory chain. ATP synthase complex consist of a soluble F(1) head domain - the catalytic core - and a membrane F(1) domain - the membrane proton channel. These two domains are linked by a central stalk rotating inside the F(1) region and a stationary peripheral stalk. During catalysis, ATP synthesis in the catalytic domain of F(1) is coupled via a rotary mechanism of the central stalk subunits to proton translocation. In vivo, can only synthesize ATP although its ATP hydrolase activity can be activated artificially in vitro. With the central stalk subunit delta, is essential for the biogenesis of F(1) catalytic part of the ATP synthase complex namely in the formation of F1 assembly intermediate. This chain is ATP synthase F(1) complex subunit gamma, mitochondrial, found in Dictyostelium discoideum (Social amoeba).